A 441-amino-acid chain; its full sequence is Ribosomal protein uS12 methylthiotransferase RimO (441 aa).

Positions 7-117 (ASIAMISLGC…VVLEVHRAAP (111 aa)) constitute an MTTase N-terminal domain. 6 residues coordinate [4Fe-4S] cluster: C16, C52, C81, C150, C154, and C157. Residues 136 to 373 (LTPRHYAYLK…MAHQQAISAA (238 aa)) form the Radical SAM core domain. A TRAM domain is found at 376-441 (QTRVGREIDV…DEYDLHGDAV (66 aa)).

The protein belongs to the methylthiotransferase family. RimO subfamily. Requires [4Fe-4S] cluster as cofactor.

The protein resides in the cytoplasm. The catalysed reaction is L-aspartate(89)-[ribosomal protein uS12]-hydrogen + (sulfur carrier)-SH + AH2 + 2 S-adenosyl-L-methionine = 3-methylsulfanyl-L-aspartate(89)-[ribosomal protein uS12]-hydrogen + (sulfur carrier)-H + 5'-deoxyadenosine + L-methionine + A + S-adenosyl-L-homocysteine + 2 H(+). Functionally, catalyzes the methylthiolation of an aspartic acid residue of ribosomal protein uS12. In Bordetella petrii (strain ATCC BAA-461 / DSM 12804 / CCUG 43448), this protein is Ribosomal protein uS12 methylthiotransferase RimO.